The following is a 138-amino-acid chain: Translation initiation factor 5A (138 aa).

Lys-42 is subject to Hypusine.

Belongs to the eIF-5A family.

It localises to the cytoplasm. Its function is as follows. Functions by promoting the formation of the first peptide bond. In Pyrobaculum aerophilum (strain ATCC 51768 / DSM 7523 / JCM 9630 / CIP 104966 / NBRC 100827 / IM2), this protein is Translation initiation factor 5A (eif5a).